The following is a 56-amino-acid chain: MVQNDFLDSYDVTMLLQDDNGKQYYEYHKGLSLSDFEVLYGNTVDEIIKLRVDKIS.

It belongs to the phi29likevirus protein p56 family. As to quaternary structure, homodimer. Interacts with host UDG; this interaction inhibits the uracil-DNA glycosylase.

Inhibits the host uracil-DNA glycosylase (UDG), an enzyme which removes uracil residues from DNA by the base excision repair. Interacts with host uracil-DNA glycosylase and prevents the latter from binding to DNA. Since the viral DNA polymerase efficiently incorporates dUMP into DNA, the virus needs to prevent the deleterious effect caused by host UDG when it eliminates uracil residues present in the viral genome. This Bacillus phage PZA (Bacteriophage PZA) protein is Protein p56 (1B).